Consider the following 715-residue polypeptide: Poly(A) polymerase alpha-A (715 aa).

ATP contacts are provided by residues 82-84 (FGP), Thr-91, 95-97 (DID), Asp-149, Lys-210, Tyr-219, and 228-229 (GV). Positions 95, 97, and 149 each coordinate Mg(2+). Positions 472–489 (RKQLHQLQPSHVSPKKKK) match the Nuclear localization signal 1 motif. Disordered stretches follow at residues 510-543 (DSDNSMSVPSPTNATRTSPLNSSGLSQGNSPAAP), 560-590 (QNNSTENLGGSLNESIPESATHPGFSSTPKP), and 607-693 (KPVS…DLSD). 2 stretches are compositionally biased toward polar residues: residues 515–539 (MSVPSPTNATRTSPLNSSGLSQGNS) and 560–588 (QNNSTENLGGSLNESIPESATHPGFSSTP). The short motif at 624–639 (KRTSSPSNEDSPKKNK) is the Nuclear localization signal 2 element. Residues 655–673 (DQNKLETEELKEVHSEEKS) are compositionally biased toward basic and acidic residues. Residues 674–692 (SSPVPGSLPFSQQSSTDLS) show a composition bias toward polar residues.

Belongs to the poly(A) polymerase family. In terms of assembly, monomer. Requires Mg(2+) as cofactor. Mn(2+) serves as cofactor.

Its subcellular location is the nucleus. The catalysed reaction is RNA(n) + ATP = RNA(n)-3'-adenine ribonucleotide + diphosphate. Its function is as follows. Polymerase that creates the 3'-poly(A) tail of mRNA's. May acquire specificity through interaction with a cleavage and polyadenylation factor (CPSF). This chain is Poly(A) polymerase alpha-A (papola-a), found in Xenopus laevis (African clawed frog).